The chain runs to 243 residues: Tubulin-folding cofactor B (243 aa).

One can recognise a CAP-Gly domain in the interval 181–223 (RAESLGPGYWVGIQYDEPLGKHDGMVKGTRFFECPRLQGGMVR).

Belongs to the TBCB family. As to quaternary structure, supercomplex made of cofactors A to E. Cofactors A and D function by capturing and stabilizing tubulin in a quasi-native conformation. Cofactor E binds to the cofactor D-tubulin complex; interaction with cofactor C then causes the release of tubulin polypeptides that are committed to the native state. Interacts with TUBA6. As to expression, expressed in roots, stems, leaves, flowers and siliques.

The protein resides in the cytoplasm. Functionally, involved in control of cell division. Regulates probably the availability of alpha-tubulin for dimerization of alpha-/beta-tubulin, which is required for proper microtubule biogenesis. Decreased expression of TFCB results in enlarged mesophyll cells and leaf epidermal cells with bulged nuclei, increased ploidy and increased numbers of spindles and phragmoplasts. The polypeptide is Tubulin-folding cofactor B (TFCB) (Arabidopsis thaliana (Mouse-ear cress)).